A 123-amino-acid polypeptide reads, in one-letter code: MTIDEMMSAIKGMTVIELSELVKALEKEFGVSAAVAVAAPAAGGAAAAAAVEEKTEFNVILKDVGANKINVIKAVRELTSLGLKEAKDMVEAAPKAVKENVSKEEADAAKKALEAAGATVEIK.

It belongs to the bacterial ribosomal protein bL12 family. As to quaternary structure, homodimer. Part of the ribosomal stalk of the 50S ribosomal subunit. Forms a multimeric L10(L12)X complex, where L10 forms an elongated spine to which 2 to 4 L12 dimers bind in a sequential fashion. Binds GTP-bound translation factors.

Forms part of the ribosomal stalk which helps the ribosome interact with GTP-bound translation factors. Is thus essential for accurate translation. The sequence is that of Large ribosomal subunit protein bL12 from Dehalococcoides mccartyi (strain ATCC BAA-2100 / JCM 16839 / KCTC 5957 / BAV1).